A 132-amino-acid chain; its full sequence is Small ribosomal subunit protein uS8 (132 aa).

Part of the 30S ribosomal subunit. Contacts proteins S5 and S12. A modified and unmodified form exist; the nature of the modification(s) is unknown.

Its function is as follows. One of the primary rRNA binding proteins, it binds directly to 16S rRNA central domain where it helps coordinate assembly of the platform of the 30S subunit. This is Small ribosomal subunit protein uS8 from Rhodopseudomonas palustris (strain ATCC BAA-98 / CGA009).